The following is a 359-amino-acid chain: Leafy/floricaula homolog FL1 (359 aa).

The segment at 113–170 (SEEQVVQHSEKDQLGRAGSGDTAGTSWGAQQQRKKHRHRHHITAMKGAATEEDEEDEE) is disordered. The span at 144-155 (QRKKHRHRHHIT) shows a compositional bias: basic residues. 3 consecutive DNA-binding regions follow at residues 179–183 (REHPF), 248–255 (NKPKMRHY), and 320–323 (YVPT). A compositionally biased stretch (low complexity) spans 340–352 (ASSASTSTSAPTA). The tract at residues 340–359 (ASSASTSTSAPTAHHLELPY) is disordered.

This sequence belongs to the FLO/LFY family. In terms of tissue distribution, expressed strongly in the early floral primordium and then successively in the primordia of sepals, petals, stamens and carpels. Also in the leaf primordia and young leaves.

The protein resides in the nucleus. Its function is as follows. Probable transcription factor. This Eucalyptus globulus (Tasmanian blue gum) protein is Leafy/floricaula homolog FL1 (LF1).